We begin with the raw amino-acid sequence, 363 residues long: Chorismate synthase (363 aa).

Positions 48 and 54 each coordinate NADP(+). FMN is bound by residues 125 to 127, 237 to 238, Gly-277, 292 to 296, and Arg-318; these read RSS, NA, and KPTSS.

It belongs to the chorismate synthase family. As to quaternary structure, homotetramer. It depends on FMNH2 as a cofactor.

The catalysed reaction is 5-O-(1-carboxyvinyl)-3-phosphoshikimate = chorismate + phosphate. It functions in the pathway metabolic intermediate biosynthesis; chorismate biosynthesis; chorismate from D-erythrose 4-phosphate and phosphoenolpyruvate: step 7/7. Functionally, catalyzes the anti-1,4-elimination of the C-3 phosphate and the C-6 proR hydrogen from 5-enolpyruvylshikimate-3-phosphate (EPSP) to yield chorismate, which is the branch point compound that serves as the starting substrate for the three terminal pathways of aromatic amino acid biosynthesis. This reaction introduces a second double bond into the aromatic ring system. The sequence is that of Chorismate synthase from Pseudomonas putida (strain W619).